Here is a 142-residue protein sequence, read N- to C-terminus: Hemoglobin subunit alpha-A (142 aa).

A Globin domain is found at 2-142 (VLSAADKTNV…VGTVLTAKYR (141 aa)). An O2-binding site is contributed by histidine 59. Histidine 88 provides a ligand contact to heme b.

Belongs to the globin family. As to quaternary structure, heterotetramer of two alpha chains and two beta chains. As to expression, red blood cells.

Its function is as follows. Involved in oxygen transport from the lung to the various peripheral tissues. The protein is Hemoglobin subunit alpha-A (HBAA) of Anser anser anser (Western greylag goose).